The following is a 312-amino-acid chain: DNA-directed RNA polymerase subunit alpha (312 aa).

The alpha N-terminal domain (alpha-NTD) stretch occupies residues 1 to 226; the sequence is MIEFEKPKIT…DHLNLFVDLS (226 aa). The interval 243 to 312 is alpha C-terminal domain (alpha-CTD); the sequence is TERVLDKIIE…ELGLSLKKRK (70 aa).

The protein belongs to the RNA polymerase alpha chain family. Homodimer. The RNAP catalytic core consists of 2 alpha, 1 beta, 1 beta' and 1 omega subunit. When a sigma factor is associated with the core the holoenzyme is formed, which can initiate transcription.

It carries out the reaction RNA(n) + a ribonucleoside 5'-triphosphate = RNA(n+1) + diphosphate. Functionally, DNA-dependent RNA polymerase catalyzes the transcription of DNA into RNA using the four ribonucleoside triphosphates as substrates. The polypeptide is DNA-directed RNA polymerase subunit alpha (Lactococcus lactis subsp. cremoris (strain SK11)).